We begin with the raw amino-acid sequence, 253 residues long: Succinate dehydrogenase [ubiquinone] iron-sulfur subunit, mitochondrial (253 aa).

Positions 23 to 114 constitute a 2Fe-2S ferredoxin-type domain; it reads FKIYRWNPDK…TTKIYPLPHM (92 aa). The [2Fe-2S] cluster site is built by cysteine 74, cysteine 79, cysteine 82, and cysteine 94. The 4Fe-4S ferredoxin-type domain occupies 156 to 186; that stretch reads DRKKLDGLYECILCACCSTSCPSYWWNQEEY. Positions 166, 169, and 172 each coordinate [4Fe-4S] cluster. Cysteine 176 is a binding site for [3Fe-4S] cluster. Position 181 (tryptophan 181) interacts with a ubiquinone. 2 residues coordinate [3Fe-4S] cluster: cysteine 223 and cysteine 229. Cysteine 233 lines the [4Fe-4S] cluster pocket.

Belongs to the succinate dehydrogenase/fumarate reductase iron-sulfur protein family. As to quaternary structure, component of complex II composed of four subunits: a flavoprotein (FP), an iron-sulfur protein (IP), and a cytochrome b composed of a large and a small subunit. It depends on [2Fe-2S] cluster as a cofactor. The cofactor is [3Fe-4S] cluster. Requires [4Fe-4S] cluster as cofactor.

It is found in the mitochondrion inner membrane. The catalysed reaction is a quinone + succinate = fumarate + a quinol. Its pathway is carbohydrate metabolism; tricarboxylic acid cycle; fumarate from succinate (eukaryal route): step 1/1. Its function is as follows. Iron-sulfur protein (IP) subunit of succinate dehydrogenase (SDH) that is involved in complex II of the mitochondrial electron transport chain and is responsible for transferring electrons from succinate to ubiquinone (coenzyme Q). In Candida glabrata (strain ATCC 2001 / BCRC 20586 / JCM 3761 / NBRC 0622 / NRRL Y-65 / CBS 138) (Yeast), this protein is Succinate dehydrogenase [ubiquinone] iron-sulfur subunit, mitochondrial (SDH2).